The primary structure comprises 322 residues: Lipoyl synthase (322 aa).

Residues Met-1–Thr-14 show a composition bias toward polar residues. A disordered region spans residues Met-1–Val-30. Residues Pro-15–Ser-26 are compositionally biased toward basic and acidic residues. Positions 70, 75, 81, 96, 100, 103, and 310 each coordinate [4Fe-4S] cluster. Residues Phe-82–Ala-299 enclose the Radical SAM core domain.

The protein belongs to the radical SAM superfamily. Lipoyl synthase family. [4Fe-4S] cluster is required as a cofactor.

The protein resides in the cytoplasm. It carries out the reaction [[Fe-S] cluster scaffold protein carrying a second [4Fe-4S](2+) cluster] + N(6)-octanoyl-L-lysyl-[protein] + 2 oxidized [2Fe-2S]-[ferredoxin] + 2 S-adenosyl-L-methionine + 4 H(+) = [[Fe-S] cluster scaffold protein] + N(6)-[(R)-dihydrolipoyl]-L-lysyl-[protein] + 4 Fe(3+) + 2 hydrogen sulfide + 2 5'-deoxyadenosine + 2 L-methionine + 2 reduced [2Fe-2S]-[ferredoxin]. It functions in the pathway protein modification; protein lipoylation via endogenous pathway; protein N(6)-(lipoyl)lysine from octanoyl-[acyl-carrier-protein]: step 2/2. Functionally, catalyzes the radical-mediated insertion of two sulfur atoms into the C-6 and C-8 positions of the octanoyl moiety bound to the lipoyl domains of lipoate-dependent enzymes, thereby converting the octanoylated domains into lipoylated derivatives. The sequence is that of Lipoyl synthase from Methylococcus capsulatus (strain ATCC 33009 / NCIMB 11132 / Bath).